The following is a 351-amino-acid chain: Translation initiation factor eIF2B subunit beta (351 aa).

The protein belongs to the eIF-2B alpha/beta/delta subunits family. In terms of assembly, component of the translation initiation factor 2B (eIF2B) complex which is a heterodecamer of two sets of five different subunits: alpha, beta, gamma, delta and epsilon. Subunits alpha, beta and delta comprise a regulatory subcomplex and subunits epsilon and gamma comprise a catalytic subcomplex. Within the complex, the hexameric regulatory complex resides at the center, with the two heterodimeric catalytic subcomplexes bound on opposite sides.

It localises to the cytoplasm. It is found in the cytosol. Activated by the chemical integrated stress response (ISR) inhibitor ISRIB which stimulates guanine nucleotide exchange factor activity for both phosphorylated and unphosphorylated eIF2. Its function is as follows. Acts as a component of the translation initiation factor 2B (eIF2B) complex, which catalyzes the exchange of GDP for GTP on eukaryotic initiation factor 2 (eIF2) gamma subunit. Its guanine nucleotide exchange factor activity is repressed when bound to eIF2 complex phosphorylated on the alpha subunit, thereby limiting the amount of methionyl-initiator methionine tRNA available to the ribosome and consequently global translation is repressed. In Homo sapiens (Human), this protein is Translation initiation factor eIF2B subunit beta (EIF2B2).